Reading from the N-terminus, the 164-residue chain is 2S albumin seed storage protein PINP1 (164 aa).

Positions 1–29 (MGVFSSPMSTLRWVTLFAALLSLLEWGTA) are cleaved as a signal peptide. Residues 92–107 (DQSQSYDSSTDSDSQD) show a composition bias toward low complexity. Residues 92-137 (DQSQSYDSSTDSDSQDGAPLNQRRRRRGEGRGREEEEAVERAEELP) are disordered. Positions 120-137 (EGRGREEEEAVERAEELP) are enriched in basic and acidic residues. A glycan (N-linked (GalNAc...) asparagine) is linked at Asn138.

It belongs to the 2S seed storage albumins family.

The protein is 2S albumin seed storage protein PINP1 of Pinus pinea (Italian stone pine).